Reading from the N-terminus, the 140-residue chain is Cytochrome c-type biogenesis protein CcmE (140 aa).

The Cytoplasmic portion of the chain corresponds to 1 to 7 (MTKRQNR). A helical; Signal-anchor for type II membrane protein membrane pass occupies residues 8–28 (MVLVALLVIGVSLAGYLGLKA). At 29 to 140 (FNENLLYFLS…DALEKAKNKQ (112 aa)) the chain is on the periplasmic side. 2 residues coordinate heme: histidine 120 and tyrosine 124.

Belongs to the CcmE/CycJ family.

It localises to the cell inner membrane. Its function is as follows. Heme chaperone required for the biogenesis of c-type cytochromes. Transiently binds heme delivered by CcmC and transfers the heme to apo-cytochromes in a process facilitated by CcmF and CcmH. The polypeptide is Cytochrome c-type biogenesis protein CcmE (Vesicomyosocius okutanii subsp. Calyptogena okutanii (strain HA)).